The primary structure comprises 146 residues: uncharacterized protein (146 aa).

4 helical membrane passes run 1–21 (MFAN…AASL), 35–55 (AAVY…LFVG), 87–107 (GGAG…GVGH), and 111–131 (AIAA…GGHL).

It is found in the cell membrane. This is an uncharacterized protein from Mycobacterium tuberculosis (strain CDC 1551 / Oshkosh).